The chain runs to 66 residues: MFTLKKSQLLLFFPGTINLSLCQDETNAEEERRDEEVAKMEEIKRGLLSGILGAGKHIVCGLSGLC.

Residues 1–22 form the signal peptide; that stretch reads MFTLKKSQLLLFFPGTINLSLC. Positions 23-45 are excised as a propeptide; sequence QDETNAEEERRDEEVAKMEEIKR. A disulfide bridge links C60 with C66.

Expressed by the skin glands.

The protein resides in the secreted. Antimicrobial peptide active at least against the Gram-positive bacterium S.aureus but with otherwise unclear activity spectrum. Lacks hemolytic activity against rabbit or human erythrocytes. This is Nigrocin-2GRa from Odorrana grahami (Yunnanfu frog).